We begin with the raw amino-acid sequence, 136 residues long: Small ribosomal subunit protein uS19 (136 aa).

The interval 114–136 (RSRVSHGSAGVGATRSSKFVPLK) is disordered.

The protein belongs to the universal ribosomal protein uS19 family.

Functionally, protein S19 forms a complex with S13 that binds strongly to the 16S ribosomal RNA. This chain is Small ribosomal subunit protein uS19, found in Methanosarcina barkeri (strain Fusaro / DSM 804).